The chain runs to 1352 residues: Alpha-protein kinase 1 (1352 aa).

Residues 7–127 enclose the Arf-GAP domain; sequence DPNYGLLRSL…RWTSSLSTSD (121 aa). A C4-type zinc finger spans residues 25-48; that stretch reads CAECNSANVPYVCIKLGVFICPTC. Disordered stretches follow at residues 123–164, 219–380, 424–445, 457–484, 503–560, and 619–658; these read LSTS…NNNN, TQSQ…PQHH, QQQQ…NSEP, HNHH…GNNS, FVEE…GGVS, and IINN…TNQN. Over residues 237–246 the composition is skewed to polar residues; it reads GFSPFNSPRS. Low complexity-rich tracts occupy residues 268-287 and 298-318; these read NNSN…NNGN and NNNN…NNNN. Polar residues-rich tracts occupy residues 329–352 and 359–379; these read KTFS…SGNS and HPTQ…SPQH. A coiled-coil region spans residues 393-429; the sequence is TTQQQLQQQQLQLQQQLQQQLQQQQQQQQQQQQQQQS. Basic residues-rich tracts occupy residues 458–470 and 510–523; these read NHHH…HHKQ and HQHP…RHHS. Residues 619–636 are compositionally biased toward low complexity; that stretch reads IINNQNNQNNNNNNNTNN. Residues 689–781 are a coiled coil; the sequence is YIQQQQQQQQ…QQQQQQHINL (93 aa). Disordered stretches follow at residues 786–863 and 901–979; these read PLQS…TDED and TSPI…PDAR. The segment covering 799–812 has biased composition (polar residues); it reads PQHSSSQYMNQQGY. Over residues 821–859 the composition is skewed to low complexity; the sequence is QPQSPQQIQPQPLQQQIFQQVQQQQPQIPQQSPQPLQSS. Residues 906-915 are compositionally biased toward pro residues; sequence QQPPQPPQPV. A compositionally biased stretch (low complexity) spans 931–965; sequence QQQNGPTVPQQQQQQQQQQQQQQQQQQQQQQQQQP. The 205-residue stretch at 990–1194 folds into the Alpha-type protein kinase domain; it reads RFDAKLGKWV…ICHYLGLSSV (205 aa). 1164–1169 lines the ATP pocket; sequence GKGNLG. 2 disordered regions span residues 1198–1234 and 1279–1352; these read PAND…SFNF and QQQQ…KLVS. A coiled-coil region spans residues 1241–1320; the sequence is HVLEQLNQQQ…QQQQQQQQNG (80 aa). The span at 1279–1319 shows a compositional bias: low complexity; it reads QQQQQQQQQQQQQQQQNQQQNQQQNQQQQQQQQQQQQQQQN. Residues 1321–1332 are compositionally biased toward pro residues; that stretch reads HPPPQTPLPPTP. Positions 1334 to 1352 are enriched in basic and acidic residues; that stretch reads QKDKPKIEVFGDILRKLVS.

This sequence belongs to the protein kinase superfamily. Alpha-type protein kinase family. ALPK subfamily.

This Dictyostelium discoideum (Social amoeba) protein is Alpha-protein kinase 1 (ak1).